The chain runs to 380 residues: Glucose-1-phosphate adenylyltransferase (380 aa).

Residues tyrosine 100, glycine 165, 180 to 181, and serine 191 contribute to the alpha-D-glucose 1-phosphate site; that span reads EK.

Belongs to the bacterial/plant glucose-1-phosphate adenylyltransferase family. In terms of assembly, homotetramer.

It carries out the reaction alpha-D-glucose 1-phosphate + ATP + H(+) = ADP-alpha-D-glucose + diphosphate. It functions in the pathway glycan biosynthesis; glycogen biosynthesis. Involved in the biosynthesis of ADP-glucose, a building block required for the elongation reactions to produce glycogen. Catalyzes the reaction between ATP and alpha-D-glucose 1-phosphate (G1P) to produce pyrophosphate and ADP-Glc. The polypeptide is Glucose-1-phosphate adenylyltransferase (Clostridium acetobutylicum (strain ATCC 824 / DSM 792 / JCM 1419 / IAM 19013 / LMG 5710 / NBRC 13948 / NRRL B-527 / VKM B-1787 / 2291 / W)).